The following is a 423-amino-acid chain: Glucose-1-phosphate adenylyltransferase (423 aa).

Residues Tyr98, Gly163, 178 to 179 (EK), and Ser189 each bind alpha-D-glucose 1-phosphate.

It belongs to the bacterial/plant glucose-1-phosphate adenylyltransferase family. In terms of assembly, homotetramer.

The catalysed reaction is alpha-D-glucose 1-phosphate + ATP + H(+) = ADP-alpha-D-glucose + diphosphate. It functions in the pathway glycan biosynthesis; glycogen biosynthesis. Involved in the biosynthesis of ADP-glucose, a building block required for the elongation reactions to produce glycogen. Catalyzes the reaction between ATP and alpha-D-glucose 1-phosphate (G1P) to produce pyrophosphate and ADP-Glc. The protein is Glucose-1-phosphate adenylyltransferase of Thermotoga sp. (strain RQ2).